Reading from the N-terminus, the 588-residue chain is Aspartate--tRNA ligase (588 aa).

An L-aspartate-binding site is contributed by Glu-174. The tract at residues 198–201 (QLFK) is aspartate. L-aspartate is bound at residue Arg-220. ATP is bound by residues 220 to 222 (RDE) and Gln-229. His-448 is an L-aspartate binding site. Glu-482 is a binding site for ATP. Arg-489 serves as a coordination point for L-aspartate. Position 534–537 (534–537 (GLDR)) interacts with ATP.

It belongs to the class-II aminoacyl-tRNA synthetase family. Type 1 subfamily. Homodimer.

The protein resides in the cytoplasm. The enzyme catalyses tRNA(Asp) + L-aspartate + ATP = L-aspartyl-tRNA(Asp) + AMP + diphosphate. Catalyzes the attachment of L-aspartate to tRNA(Asp) in a two-step reaction: L-aspartate is first activated by ATP to form Asp-AMP and then transferred to the acceptor end of tRNA(Asp). This chain is Aspartate--tRNA ligase, found in Exiguobacterium sibiricum (strain DSM 17290 / CCUG 55495 / CIP 109462 / JCM 13490 / 255-15).